The sequence spans 347 residues: tRNA N6-adenosine threonylcarbamoyltransferase (347 aa).

Positions 115 and 119 each coordinate Fe cation. Residues 137-141 (LASGG), D170, G183, and N281 contribute to the substrate site. D309 contacts Fe cation.

It belongs to the KAE1 / TsaD family. Requires Fe(2+) as cofactor.

It is found in the cytoplasm. It catalyses the reaction L-threonylcarbamoyladenylate + adenosine(37) in tRNA = N(6)-L-threonylcarbamoyladenosine(37) in tRNA + AMP + H(+). In terms of biological role, required for the formation of a threonylcarbamoyl group on adenosine at position 37 (t(6)A37) in tRNAs that read codons beginning with adenine. Is involved in the transfer of the threonylcarbamoyl moiety of threonylcarbamoyl-AMP (TC-AMP) to the N6 group of A37, together with TsaE and TsaB. TsaD likely plays a direct catalytic role in this reaction. The polypeptide is tRNA N6-adenosine threonylcarbamoyltransferase (Methylorubrum extorquens (strain CM4 / NCIMB 13688) (Methylobacterium extorquens)).